The chain runs to 402 residues: Acetylornithine aminotransferase (402 aa).

Residues 106 to 107 (GA) and Phe-132 each bind pyridoxal 5'-phosphate. N(2)-acetyl-L-ornithine is bound at residue Arg-135. 217 to 220 (DEVQ) serves as a coordination point for pyridoxal 5'-phosphate. Lys-247 carries the post-translational modification N6-(pyridoxal phosphate)lysine. Thr-275 provides a ligand contact to N(2)-acetyl-L-ornithine. Thr-276 is a pyridoxal 5'-phosphate binding site.

The protein belongs to the class-III pyridoxal-phosphate-dependent aminotransferase family. ArgD subfamily. In terms of assembly, homodimer. The cofactor is pyridoxal 5'-phosphate.

Its subcellular location is the cytoplasm. The catalysed reaction is N(2)-acetyl-L-ornithine + 2-oxoglutarate = N-acetyl-L-glutamate 5-semialdehyde + L-glutamate. The protein operates within amino-acid biosynthesis; L-arginine biosynthesis; N(2)-acetyl-L-ornithine from L-glutamate: step 4/4. The chain is Acetylornithine aminotransferase from Streptomyces coelicolor (strain ATCC BAA-471 / A3(2) / M145).